The following is a 347-amino-acid chain: Phosphoribosylformylglycinamidine cyclo-ligase (347 aa).

It belongs to the AIR synthase family.

The protein resides in the cytoplasm. It catalyses the reaction 2-formamido-N(1)-(5-O-phospho-beta-D-ribosyl)acetamidine + ATP = 5-amino-1-(5-phospho-beta-D-ribosyl)imidazole + ADP + phosphate + H(+). The protein operates within purine metabolism; IMP biosynthesis via de novo pathway; 5-amino-1-(5-phospho-D-ribosyl)imidazole from N(2)-formyl-N(1)-(5-phospho-D-ribosyl)glycinamide: step 2/2. The protein is Phosphoribosylformylglycinamidine cyclo-ligase of Prochlorococcus marinus (strain MIT 9312).